The primary structure comprises 201 residues: LexA repressor (201 aa).

A DNA-binding region (H-T-H motif) is located at residues 27-47 (RMEISSAFGFASPNAAEDHLK). Residues Ser116 and Lys153 each act as for autocatalytic cleavage activity in the active site.

It belongs to the peptidase S24 family. In terms of assembly, homodimer.

The catalysed reaction is Hydrolysis of Ala-|-Gly bond in repressor LexA.. In terms of biological role, represses a number of genes involved in the response to DNA damage (SOS response), including recA and lexA. In the presence of single-stranded DNA, RecA interacts with LexA causing an autocatalytic cleavage which disrupts the DNA-binding part of LexA, leading to derepression of the SOS regulon and eventually DNA repair. The chain is LexA repressor from Dechloromonas aromatica (strain RCB).